The primary structure comprises 603 residues: Probable potassium transport system protein Kup (603 aa).

Transmembrane regions (helical) follow at residues 15 to 35 (GLVF…IFLL), 43 to 63 (VIGV…VEYA), 94 to 114 (AAFI…DGVI), 136 to 156 (IGQG…FSVQ), 163 to 183 (ITWV…FSGI), 201 to 221 (AISF…EVIL), 244 to 264 (AWRL…AFII), 284 to 304 (IYIP…QAMI), 336 to 356 (IYIG…IFEF), 367 to 387 (GLAV…IFYL), 391 to 411 (MFRS…LLSN), and 415 to 435 (IPHG…LIII).

The protein belongs to the HAK/KUP transporter (TC 2.A.72) family.

It is found in the cell membrane. The enzyme catalyses K(+)(in) + H(+)(in) = K(+)(out) + H(+)(out). In terms of biological role, transport of potassium into the cell. Likely operates as a K(+):H(+) symporter. The protein is Probable potassium transport system protein Kup of Methanosarcina acetivorans (strain ATCC 35395 / DSM 2834 / JCM 12185 / C2A).